Here is a 420-residue protein sequence, read N- to C-terminus: Tryptophan--tRNA ligase (420 aa).

The 'HIGH' region signature appears at 72 to 80 (PSGLPHFGH). Residues 308-312 (KMSSS) carry the 'KMSKS' region motif.

It belongs to the class-I aminoacyl-tRNA synthetase family.

The protein localises to the cytoplasm. It carries out the reaction tRNA(Trp) + L-tryptophan + ATP = L-tryptophyl-tRNA(Trp) + AMP + diphosphate + H(+). This is Tryptophan--tRNA ligase from Archaeoglobus fulgidus (strain ATCC 49558 / DSM 4304 / JCM 9628 / NBRC 100126 / VC-16).